Reading from the N-terminus, the 1420-residue chain is DNA-directed RNA polymerase subunit beta' (1420 aa).

Zn(2+) contacts are provided by C71, C73, C86, and C89. Mg(2+)-binding residues include D461, D463, and D465. C815, C889, C896, and C899 together coordinate Zn(2+).

It belongs to the RNA polymerase beta' chain family. As to quaternary structure, the RNAP catalytic core consists of 2 alpha, 1 beta, 1 beta' and 1 omega subunit. When a sigma factor is associated with the core the holoenzyme is formed, which can initiate transcription. The cofactor is Mg(2+). Zn(2+) serves as cofactor.

The enzyme catalyses RNA(n) + a ribonucleoside 5'-triphosphate = RNA(n+1) + diphosphate. In terms of biological role, DNA-dependent RNA polymerase catalyzes the transcription of DNA into RNA using the four ribonucleoside triphosphates as substrates. In Haemophilus ducreyi (strain 35000HP / ATCC 700724), this protein is DNA-directed RNA polymerase subunit beta'.